The sequence spans 278 residues: Cation-dependent mannose-6-phosphate receptor (278 aa).

Residues 1 to 21 (MFPFSGCWRTELLLLLLLAVA) form the signal peptide. At 22–186 (VRESWQIEEK…SLACSPEVSH (165 aa)) the chain is on the lumenal side. The MRH domain maps to 31 to 182 (KSCDLVGEKD…EMDSSLACSP (152 aa)). Cysteines 33 and 79 form a disulfide. N-linked (GlcNAc...) asparagine glycans are attached at residues asparagine 58, asparagine 84, asparagine 95, asparagine 108, and asparagine 114. Intrachain disulfides connect cysteine 133–cysteine 168 and cysteine 146–cysteine 180. Residues 187–211 (LSVGSILLVIFASLVAVYIIGGFLY) traverse the membrane as a helical segment. Residues 212 to 278 (QRLVVGAKGM…EERDDHLLPM (67 aa)) lie on the Cytoplasmic side of the membrane. The segment at 257-278 (RGVGDDQLGEESEERDDHLLPM) is disordered. A Phosphoserine modification is found at serine 268.

In terms of assembly, homodimer. Binds GGA1, GGA2 and GGA3.

It localises to the lysosome membrane. Its function is as follows. Transport of phosphorylated lysosomal enzymes from the Golgi complex and the cell surface to lysosomes. Lysosomal enzymes bearing phosphomannosyl residues bind specifically to mannose-6-phosphate receptors in the Golgi apparatus and the resulting receptor-ligand complex is transported to an acidic prelyosomal compartment where the low pH mediates the dissociation of the complex. This Mus musculus (Mouse) protein is Cation-dependent mannose-6-phosphate receptor (M6pr).